Here is a 624-residue protein sequence, read N- to C-terminus: Chaperone protein HtpG (624 aa).

Residues 1-338 (MNNKNKITHT…SQDLPLNISR (338 aa)) are a; substrate-binding. Residues 339–552 (EILQDSSITH…TNDMSTQMAK (214 aa)) are b. A c region spans residues 553 to 624 (IFSAAGQPIP…IQRINNFFIS (72 aa)).

This sequence belongs to the heat shock protein 90 family. As to quaternary structure, homodimer.

The protein localises to the cytoplasm. Functionally, molecular chaperone. Has ATPase activity. This is Chaperone protein HtpG from Buchnera aphidicola subsp. Cinara cedri (strain Cc).